Here is a 262-residue protein sequence, read N- to C-terminus: G patch domain-containing protein 11 (262 aa).

Composition is skewed to basic and acidic residues over residues 39-61 (LHKEKDIQNRQKSFKEQEKESRE), 114-127 (EEVKKRKADEELQN), and 136-165 (QHLEKKSIEDFRVRKRTEREERQTQGDLRK). 2 disordered regions span residues 39 to 71 (LHKEKDIQNRQKSFKEQEKESREAALQSSIGSQ) and 88 to 169 (GLGK…SQRA). Residues 41-62 (KEKDIQNRQKSFKEQEKESREA) are a coiled coil. The G-patch domain maps to 70–116 (SQNKGFALLQKMGYKAGQGLGKEGAGRVEPVPLNIKTDRGGIGMEEV).

Belongs to the GPATCH11 family.

The protein resides in the chromosome. It localises to the centromere. Its subcellular location is the kinetochore. This chain is G patch domain-containing protein 11 (gpatch11), found in Danio rerio (Zebrafish).